The primary structure comprises 328 residues: Interleukin-12 subunit beta (328 aa).

The first 22 residues, 1–22, serve as a signal peptide directing secretion; that stretch reads MCHQQLVISWFSLVFLASPLMA. One can recognise an Ig-like C2-type domain in the interval 29–106; it reads DVYVVELDWY…LSHSLLLLHK (78 aa). An intrachain disulfide couples cysteine 50 to cysteine 90. N-linked (GlcNAc...) asparagine glycans are attached at residues asparagine 125, asparagine 135, asparagine 222, and asparagine 303. The region spanning 237–328 is the Fibronectin type-III domain; it reads PPKNLQLKPL…WSEWASVPCS (92 aa).

This sequence belongs to the IL-12B family. Heterodimer with IL12A; disulfide-linked. The heterodimer is known as interleukin IL-12. Heterodimer with IL23A; disulfide-linked. The heterodimer is known as interleukin IL-23. Also secreted as a monomer. Interacts with NBR1; this interaction promotes IL-12 secretion.

It localises to the secreted. Its function is as follows. Cytokine that can act as a growth factor for activated T and NK cells, enhance the lytic activity of NK/lymphokine-activated killer cells, and stimulate the production of IFN-gamma by resting PBMC. In terms of biological role, associates with IL23A to form the IL-23 interleukin, a heterodimeric cytokine which functions in innate and adaptive immunity. IL-23 may constitute with IL-17 an acute response to infection in peripheral tissues. IL-23 binds to a heterodimeric receptor complex composed of IL12RB1 and IL23R, activates the Jak-Stat signaling cascade, stimulates memory rather than naive T-cells and promotes production of pro-inflammatory cytokines. IL-23 induces autoimmune inflammation and thus may be responsible for autoimmune inflammatory diseases and may be important for tumorigenesis. In Papio anubis (Olive baboon), this protein is Interleukin-12 subunit beta (IL12B).